Here is a 123-residue protein sequence, read N- to C-terminus: Class II hydrophobin 2 (123 aa).

A signal peptide spans methionine 1–glycine 16. 4 disulfide bridges follow: cysteine 22–cysteine 70, cysteine 32–cysteine 61, cysteine 33–cysteine 45, and cysteine 71–cysteine 82.

This sequence belongs to the cerato-ulmin hydrophobin family. As to quaternary structure, homodimer. Homodimers further self-assemble to form highly ordered films at water-air interfaces through intermolecular interactions.

The protein localises to the secreted. It localises to the cell wall. Its function is as follows. Aerial growth, conidiation, and dispersal of filamentous fungi in the environment rely upon a capability of their secreting small amphipathic proteins called hydrophobins (HPBs) with low sequence identity. Class I can self-assemble into an outermost layer of rodlet bundles on aerial cell surfaces, conferring cellular hydrophobicity that supports fungal growth, development and dispersal; whereas Class II form highly ordered films at water-air interfaces through intermolecular interactions but contribute nothing to the rodlet structure. Hyd2 is a class II hydrophobin that plays probably a role in intraspecific signaling or hyphal fusion. Not necessary for root adhesion and colonization. Might play an essential role since no deletion mutants could be obtained. The protein is Class II hydrophobin 2 of Bionectria ochroleuca (Gliocladium roseum).